Consider the following 89-residue polypeptide: Small ribosomal subunit protein uS15 (89 aa).

This sequence belongs to the universal ribosomal protein uS15 family. As to quaternary structure, part of the 30S ribosomal subunit. Forms a bridge to the 50S subunit in the 70S ribosome, contacting the 23S rRNA.

Functionally, one of the primary rRNA binding proteins, it binds directly to 16S rRNA where it helps nucleate assembly of the platform of the 30S subunit by binding and bridging several RNA helices of the 16S rRNA. In terms of biological role, forms an intersubunit bridge (bridge B4) with the 23S rRNA of the 50S subunit in the ribosome. The polypeptide is Small ribosomal subunit protein uS15 (Paracoccus denitrificans (strain Pd 1222)).